The following is a 248-amino-acid chain: uncharacterized protein (248 aa).

The signal sequence occupies residues 1 to 23 (MLKKIVIGVTATAAFGIGAGALA).

The protein resides in the cell outer membrane. This is an uncharacterized protein from Coxiella burnetii (strain RSA 493 / Nine Mile phase I).